Here is an 840-residue protein sequence, read N- to C-terminus: Probable alpha-glucuronidase A (840 aa).

The signal sequence occupies residues M1–A19. N-linked (GlcNAc...) asparagine glycosylation is found at N50, N149, N222, N262, N279, N310, N465, N527, N576, N610, N682, N723, and N732.

Belongs to the glycosyl hydrolase 67 family.

It localises to the secreted. The catalysed reaction is an alpha-D-glucuronoside + H2O = D-glucuronate + an alcohol. Functionally, alpha-glucuronidase involved in the hydrolysis of xylan, a major structural heterogeneous polysaccharide found in plant biomass representing the second most abundant polysaccharide in the biosphere, after cellulose. Releases 4-O-methylglucuronic acid from xylan. The polypeptide is Probable alpha-glucuronidase A (aguA) (Aspergillus fumigatus (strain ATCC MYA-4609 / CBS 101355 / FGSC A1100 / Af293) (Neosartorya fumigata)).